The chain runs to 709 residues: Threonine--tRNA ligase, mitochondrial 1 (709 aa).

Residues 1-21 constitute a mitochondrion transit peptide; sequence MLLRLTARSIRRFTTSSSSLP. The 63-residue stretch at 73-135 folds into the TGS domain; that stretch reads DPIKVTLPDG…EGDCKLELFK (63 aa). 3 residues coordinate Zn(2+): Cys407, His458, and His584.

Belongs to the class-II aminoacyl-tRNA synthetase family.

Its subcellular location is the mitochondrion. It localises to the cytoplasm. It is found in the cytosol. The catalysed reaction is tRNA(Thr) + L-threonine + ATP = L-threonyl-tRNA(Thr) + AMP + diphosphate + H(+). The chain is Threonine--tRNA ligase, mitochondrial 1 from Arabidopsis thaliana (Mouse-ear cress).